The chain runs to 368 residues: MLKEFEIEPLLKDKAPHQTKAIVAMSGGVDSSVAAALLYNLGYEVIGVTLQLYGSDGNARKGACCAGQDIYDAKYVAESVGFPHYILNYEEIFKKEVIEDFANTYMRGETPIPCVRCNQTVKFRDLLQVTKNLGADVLVTGHYVRRLEENGEVKLCRSIDKSKDQSYFLFATTEEQLKLLRFPLGGFYKSDIRKLAKYFGLQISEKPDSQDICFVSESYSKTIAKLAPQSVQKGKIVDIHGKVLGEHSGIVNFTVGQRRGLCIAHNEPLYVIKINTENNEVVVGPINALMQKKILVKELNWLEQPKEGMEVTVKLRSSHAGSSATIYSTDEKNKACVILNDDYFGISPGQACVAYKGEQVIGGGWICS.

ATP contacts are provided by residues 24–31 and Leu-50; that span reads AMSGGVDS. Catalysis depends on Cys-117, which acts as the Nucleophile. Cys-117 and Cys-213 are oxidised to a cystine. Gly-141 contributes to the ATP binding site. Residues 163–165 are interaction with tRNA; the sequence is KDQ. Catalysis depends on Cys-213, which acts as the Cysteine persulfide intermediate.

This sequence belongs to the MnmA/TRMU family.

Its subcellular location is the cytoplasm. It catalyses the reaction S-sulfanyl-L-cysteinyl-[protein] + uridine(34) in tRNA + AH2 + ATP = 2-thiouridine(34) in tRNA + L-cysteinyl-[protein] + A + AMP + diphosphate + H(+). Functionally, catalyzes the 2-thiolation of uridine at the wobble position (U34) of tRNA, leading to the formation of s(2)U34. The polypeptide is tRNA-specific 2-thiouridylase MnmA (Wolbachia pipientis subsp. Culex pipiens (strain wPip)).